Reading from the N-terminus, the 231-residue chain is MKRAVVVFSGGQDSTTCLAQARHQYDEVHCVTFDYGQRHRAEIDVARDLALKLGARAHKVLDVTLLNELAVSSLTRDSIPVPDYEPNADGIPNTFVPGRNILFLTLAAIYAYQVKAEAVITGVCETDFSGYPDCRDEFVKALNHAVNLGMAKDIRFETPLMWIDKAETWALADYWGQLDLVREETLTCYNGIKGDGCGHCAACNLRANGLNHYLSNKAAVMTAMKQKTGLR.

8–18 contributes to the ATP binding site; that stretch reads FSGGQDSTTCL. Positions 188, 197, 200, and 203 each coordinate Zn(2+).

The protein belongs to the QueC family. The cofactor is Zn(2+).

It catalyses the reaction 7-carboxy-7-deazaguanine + NH4(+) + ATP = 7-cyano-7-deazaguanine + ADP + phosphate + H2O + H(+). Its pathway is purine metabolism; 7-cyano-7-deazaguanine biosynthesis. Catalyzes the ATP-dependent conversion of 7-carboxy-7-deazaguanine (CDG) to 7-cyano-7-deazaguanine (preQ(0)). The chain is 7-cyano-7-deazaguanine synthase from Salmonella paratyphi B (strain ATCC BAA-1250 / SPB7).